We begin with the raw amino-acid sequence, 89 residues long: Large ribosomal subunit protein bL27 (89 aa).

It belongs to the bacterial ribosomal protein bL27 family.

This chain is Large ribosomal subunit protein bL27, found in Cytophaga hutchinsonii (strain ATCC 33406 / DSM 1761 / CIP 103989 / NBRC 15051 / NCIMB 9469 / D465).